We begin with the raw amino-acid sequence, 435 residues long: Probable exopolygalacturonase X (435 aa).

Residues 1-22 (MRLTHVLSHTLGLLALGATAEA) form the signal peptide. The interval 31 to 55 (CSPKKPFRPLPTSSSRDKTCHVRSH) is disordered. Residues 45–55 (SRDKTCHVRSH) are compositionally biased toward basic and acidic residues. N-linked (GlcNAc...) asparagine glycosylation is found at asparagine 93, asparagine 112, asparagine 128, and asparagine 198. 2 PbH1 repeats span residues 199–229 (SSNV…DTYR) and 230–251 (SNNI…SFKP). Aspartate 244 acts as the Proton donor in catalysis. Residues cysteine 246 and cysteine 263 are joined by a disulfide bond. Asparagine 252 and asparagine 264 each carry an N-linked (GlcNAc...) asparagine glycan. The stretch at 253 to 273 (STNILVQNLHCNGSHGISVGS) is one PbH1 3 repeat. The active site involves histidine 267. N-linked (GlcNAc...) asparagine glycosylation is found at asparagine 291, asparagine 296, asparagine 328, and asparagine 353. The stretch at 326 to 347 (VKNITYDTALIDNVDWAIEITQ) is one PbH1 4 repeat. One copy of the PbH1 5 repeat lies at 361–409 (PSSLTISDVHIKNFRGTTSGSEDPYVGTIVCSSPDTCSDIYTSNINVTS). Cysteine 391 and cysteine 397 are disulfide-bonded. 2 N-linked (GlcNAc...) asparagine glycosylation sites follow: asparagine 406 and asparagine 429.

This sequence belongs to the glycosyl hydrolase 28 family.

It localises to the secreted. The catalysed reaction is [(1-&gt;4)-alpha-D-galacturonosyl](n) + H2O = alpha-D-galacturonate + [(1-&gt;4)-alpha-D-galacturonosyl](n-1). Functionally, specific in hydrolyzing the terminal glycosidic bond of polygalacturonic acid and oligogalacturonates. This chain is Probable exopolygalacturonase X (pgaX), found in Aspergillus niger (strain ATCC MYA-4892 / CBS 513.88 / FGSC A1513).